We begin with the raw amino-acid sequence, 1207 residues long: Ras GTPase-activating protein gap-2 (1207 aa).

2 disordered regions span residues 1–29 (MKVI…SCTK) and 221–316 (RMSS…GSLR). The PH domain maps to 40 to 383 (PPICHGWLIV…WMENLRKTMN (344 aa)). Over residues 223 to 236 (SSSSHNLSTRLSGS) the composition is skewed to low complexity. Polar residues-rich tracts occupy residues 237–247 (TQNLNQPTNAY) and 286–297 (ASNTPSRDSSLY). In terms of domain architecture, C2 spans 374 to 490 (WMENLRKTMN…SSRSPVERWY (117 aa)). The span at 495–504 (SHSDSGTSRI) shows a compositional bias: polar residues. The interval 495 to 516 (SHSDSGTSRIASALGGKSSSQE) is disordered. Positions 579-789 (NLAKEFLCDL…HRMKDFLLRI (211 aa)) constitute a Ras-GAP domain. Disordered stretches follow at residues 856 to 903 (GVFH…LGRS), 923 to 1013 (FQTP…SSSS), 1086 to 1107 (ATGG…RASR), and 1163 to 1207 (LKSK…VVPN). Polar residues-rich tracts occupy residues 862 to 876 (MVQQ…SPQQ) and 891 to 903 (TPPT…LGRS). Over residues 939–953 (TGTSSSRTSDKTTSS) the composition is skewed to low complexity. A compositionally biased stretch (basic and acidic residues) spans 955-972 (EIRDDTDSDFELREDRGR). A compositionally biased stretch (low complexity) spans 985–1013 (ASPSSSQQASSGYLSNNPSRSSYSNSSSS). A compositionally biased stretch (low complexity) spans 1181–1207 (SGASEDSYDSLSSLDRPSRQSLVVVPN).

In terms of tissue distribution, mainly expressed in gonads and vulval cells. Isoform c in expressed in pharyngeal epithelial cells and several rectal/blast cells in the tail region. Isoform f is weakly expressed in four cells symmetrically located in the vulval region. Isoform g is strongly expressed in the pharyngeal muscle cells m6 in addition to several cells in the tail region.

The protein resides in the cytoplasm. GTPase-activating protein, which acts as a negative regulator for the member of the Ras family let-60. Probably decreases the signaling activity of Ras by stimulating its intrinsic GTPase activity, thereby lowering the levels of GTP-bound, active Ras. The different isoforms may play a distinct role in specific tissues. The sequence is that of Ras GTPase-activating protein gap-2 (gap-2) from Caenorhabditis elegans.